A 161-amino-acid polypeptide reads, in one-letter code: Protein-export protein SecB (161 aa).

The protein belongs to the SecB family. As to quaternary structure, homotetramer, a dimer of dimers. One homotetramer interacts with 1 SecA dimer.

It is found in the cytoplasm. Functionally, one of the proteins required for the normal export of preproteins out of the cell cytoplasm. It is a molecular chaperone that binds to a subset of precursor proteins, maintaining them in a translocation-competent state. It also specifically binds to its receptor SecA. The sequence is that of Protein-export protein SecB from Shewanella sp. (strain MR-7).